A 400-amino-acid polypeptide reads, in one-letter code: Chalcone synthase WHP1 (400 aa).

Residue Cys167 is part of the active site.

The protein belongs to the thiolase-like superfamily. Chalcone/stilbene synthases family.

It catalyses the reaction (E)-4-coumaroyl-CoA + 3 malonyl-CoA + 3 H(+) = 2',4,4',6'-tetrahydroxychalcone + 3 CO2 + 4 CoA. Its pathway is secondary metabolite biosynthesis; flavonoid biosynthesis. Functionally, the primary product of this enzyme is 4,2',4',6'-tetrahydroxychalcone (also termed naringenin-chalcone or chalcone) which can under specific conditions spontaneously isomerize into naringenin. This Zea mays (Maize) protein is Chalcone synthase WHP1 (WHP1).